Reading from the N-terminus, the 642-residue chain is Poly(A) polymerase beta (642 aa).

ATP-binding positions include 101–103 (FGS), Thr110, 114–116 (DID), Asp168, Lys229, Tyr238, and 247–248 (GV). Asp114, Asp116, and Asp168 together coordinate Mg(2+). 2 disordered regions span residues 530–553 (SENS…GNPQ) and 620–642 (LVNH…ILGV). A compositionally biased stretch (polar residues) spans 620–636 (LVNHPSRPSGNTATNIP).

The protein belongs to the poly(A) polymerase family. Interacts with GSG1. The cofactor is Mg(2+). It depends on Mn(2+) as a cofactor. In terms of tissue distribution, testis specific.

The protein localises to the cytoplasm. The protein resides in the nucleus. It catalyses the reaction RNA(n) + ATP = RNA(n)-3'-adenine ribonucleotide + diphosphate. The chain is Poly(A) polymerase beta from Mus musculus (Mouse).